Consider the following 476-residue polypeptide: Proline--tRNA ligase 2 (476 aa).

Belongs to the class-II aminoacyl-tRNA synthetase family. ProS type 3 subfamily. In terms of assembly, homodimer.

Its subcellular location is the cytoplasm. It carries out the reaction tRNA(Pro) + L-proline + ATP = L-prolyl-tRNA(Pro) + AMP + diphosphate. Its function is as follows. Catalyzes the attachment of proline to tRNA(Pro) in a two-step reaction: proline is first activated by ATP to form Pro-AMP and then transferred to the acceptor end of tRNA(Pro). This is Proline--tRNA ligase 2 from Bacillus cereus (strain ATCC 10987 / NRS 248).